Reading from the N-terminus, the 169-residue chain is uncharacterized protein (169 aa).

Residues 144 to 157 (AEAHSASPASSDSS) show a composition bias toward low complexity. Residues 144–169 (AEAHSASPASSDSSPLTNNIRPISIM) form a disordered region. The segment covering 158–169 (PLTNNIRPISIM) has biased composition (polar residues).

This is an uncharacterized protein from Saccharomyces cerevisiae (strain ATCC 204508 / S288c) (Baker's yeast).